The chain runs to 337 residues: Serpentine receptor class beta-6 (337 aa).

Helical transmembrane passes span 20–40, 62–82, 98–118, 138–158, 183–203, 234–254, and 273–293; these read QFYT…LIIF, ILIS…IPFL, IFQN…LGIT, IGVF…YFFF, WLCY…YFLV, TFIS…TLII, and GVYI…CVIL.

The protein belongs to the nematode receptor-like protein srb family. In terms of tissue distribution, expressed in the ADL, ADF and ASH chemosensory neurons in the head and in the PHA and PHB chemosensory neurons in the tail. Low expression also observed in the egg-laying structures in the mid-body region.

The protein localises to the cell membrane. Functionally, mediates recognition and avoidance of Streptomyces species by detecting dodecanoic acid secreted by the bacteria. Also mediates avoidance of decanoic acid which is not secreted by Streptomyces species but this may represent an additional important avoidance response in the environment. This is Serpentine receptor class beta-6 (srb-6) from Caenorhabditis elegans.